A 317-amino-acid chain; its full sequence is Melanocyte-stimulating hormone receptor (317 aa).

The segment at 1–26 (MPVQGSPRSLLGAVNSTPTATPHLRP) is disordered. Over 1 to 37 (MPVQGSPRSLLGAVNSTPTATPHLRPAANQTGPQCLE) the chain is Extracellular. The N-linked (GlcNAc...) asparagine glycan is linked to asparagine 29. The helical transmembrane segment at 38–63 (VSIPDGLFLCLGLVSLVENTLVVAAI) threads the bilayer. Residues 64-72 (AKNRNLHSP) lie on the Cytoplasmic side of the membrane. Residues 73 to 93 (MYCFVCCLALSDLLVSVSSVL) traverse the membrane as a helical segment. Topologically, residues 94 to 118 (ETAVLLLLGAGALAAQATVVQLLGN) are extracellular. Residues 119–140 (VIDVLLCSSMVSSLFFLGAIAM) traverse the membrane as a helical segment. At 141 to 163 (DRYISIFYALRYHSIVTLARARR) the chain is on the cytoplasmic side. The helical transmembrane segment at 164 to 183 (AIAAIWAASMLSSTLFIAYC) threads the bilayer. Topologically, residues 184 to 191 (DHTAALLC) are extracellular. The chain crosses the membrane as a helical span at residues 192-211 (LVVFFLAMLVLMAVLYVHML). The Cytoplasmic portion of the chain corresponds to 212-240 (TQACQHAQGIARLHKRQRPVQQGWGLKGA). The helical transmembrane segment at 241–266 (ATLAILLGVFFLCWGPFFLHLTLIAV) threads the bilayer. Topologically, residues 267 to 279 (CPQHPTCSCIFKN) are extracellular. The chain crosses the membrane as a helical span at residues 280–300 (FRLFLALIVCNAIVDPLIYAF). Residues 301-317 (RSQELCKTLKELLLFSW) lie on the Cytoplasmic side of the membrane.

This sequence belongs to the G-protein coupled receptor 1 family. Interacts with MGRN1, but does not undergo MGRN1-mediated ubiquitination; this interaction competes with GNAS-binding and thus inhibits agonist-induced cAMP production. Interacts with OPN3; the interaction results in a decrease in MC1R-mediated cAMP signaling and ultimately a decrease in melanin production in melanocytes.

It localises to the cell membrane. Receptor for MSH (alpha, beta and gamma) and ACTH. The activity of this receptor is mediated by G proteins which activate adenylate cyclase. Mediates melanogenesis, the production of eumelanin (black/brown) and phaeomelanin (red/yellow), via regulation of cAMP signaling in melanocytes. This Hapalemur griseus (Gray gentle lemur) protein is Melanocyte-stimulating hormone receptor (MC1R).